Reading from the N-terminus, the 416-residue chain is Gamma-glutamyl phosphate reductase (416 aa).

Belongs to the gamma-glutamyl phosphate reductase family.

Its subcellular location is the cytoplasm. The enzyme catalyses L-glutamate 5-semialdehyde + phosphate + NADP(+) = L-glutamyl 5-phosphate + NADPH + H(+). It functions in the pathway amino-acid biosynthesis; L-proline biosynthesis; L-glutamate 5-semialdehyde from L-glutamate: step 2/2. Its function is as follows. Catalyzes the NADPH-dependent reduction of L-glutamate 5-phosphate into L-glutamate 5-semialdehyde and phosphate. The product spontaneously undergoes cyclization to form 1-pyrroline-5-carboxylate. The sequence is that of Gamma-glutamyl phosphate reductase from Leptospira interrogans serogroup Icterohaemorrhagiae serovar copenhageni (strain Fiocruz L1-130).